Here is a 149-residue protein sequence, read N- to C-terminus: Large ribosomal subunit protein bL9 (149 aa).

Belongs to the bacterial ribosomal protein bL9 family.

In terms of biological role, binds to the 23S rRNA. The polypeptide is Large ribosomal subunit protein bL9 (Glaesserella parasuis serovar 5 (strain SH0165) (Haemophilus parasuis)).